The chain runs to 270 residues: Homeobox protein Hox-D12 (270 aa).

Residues 102–122 form a disordered region; the sequence is APEAAAGPEERGRTRPSFAPE. The homeobox DNA-binding region spans 202–261; the sequence is ARKKRKPYTKQQIAELENEFLVNEFINRQKRKELSNRLNLSDQQVKIWFQNRRMKKKRVV.

Belongs to the Abd-B homeobox family.

It localises to the nucleus. Sequence-specific transcription factor which is part of a developmental regulatory system that provides cells with specific positional identities on the anterior-posterior axis. This chain is Homeobox protein Hox-D12 (HOXD12), found in Homo sapiens (Human).